Here is a 769-residue protein sequence, read N- to C-terminus: Serine protease HtrA-like (769 aa).

Residues 1–20 (MDIGKKHVIPKSQYRRKRRE) are compositionally biased toward basic residues. The segment at 1–390 (MDIGKKHVIP…ATSKLNKGRA (390 aa)) is disordered. Composition is skewed to basic and acidic residues over residues 21–64 (FFHN…ERFK) and 71–108 (LEQRNRDVNENKAEESKSNQDSKSAYNRDHYLTDDVSK). Polar residues predominate over residues 126–137 (YEQNSEATLSTK). Residues 138 to 186 (STDKVESTEMRKLSSDKNKVGHEEQHVLSKPSEHDKETRIDSESSRTDS) are compositionally biased toward basic and acidic residues. The span at 247–262 (QQSQNEQTKTYTYGDS) shows a compositional bias: polar residues. 2 stretches are compositionally biased toward basic and acidic residues: residues 264–296 (QNDKSNHENDLSHHIPSISDDKDNVMRENHIVD) and 310–330 (KTDDDRKLDEKIHVEDKHKQN). A compositionally biased stretch (polar residues) spans 331 to 347 (ADSSETVGYQSQSTASH). Residues 348-364 (RSTEKRNISINDHDKLN) show a composition bias toward basic and acidic residues. The segment covering 365-390 (GQKTNTKTSANNNQKKATSKLNKGRA) has biased composition (polar residues). The chain crosses the membrane as a helical span at residues 410 to 430 (LVILMGIIILIVILNAIFNNV). Residues histidine 504, aspartate 534, and serine 619 each act as charge relay system in the active site. Residues 680-733 (IASLNSFERQAVKLPGKVKNGVVVDQVDNNGLADQSGLKKGDVITELDGKLLED) enclose the PDZ domain.

It belongs to the peptidase S1C family.

Its subcellular location is the cell membrane. The sequence is that of Serine protease HtrA-like from Staphylococcus aureus (strain COL).